The primary structure comprises 424 residues: Arogenate dehydratase 1 (424 aa).

Residues 1-52 (MQSLTPSSGVNLKSIIRKTSLPPGQTRFITGRVIKCGYQVDSANTVNTAGAP) constitute a chloroplast transit peptide. Positions 131–308 (RVAYQGVPGA…NVTRFVMLAR (178 aa)) constitute a Prephenate dehydratase domain. Residues 321 to 412 (TSIVFAHEGT…SFLRVLGSYP (92 aa)) form the ACT domain.

As to expression, mostly expressed in flowers, especially in petals (corollas and tubes), and, at low levels, in roots, stems, leaves, pistils, stamens, ovaries and sepals.

It is found in the plastid. The protein resides in the chloroplast stroma. The catalysed reaction is L-arogenate + H(+) = L-phenylalanine + CO2 + H2O. It participates in amino-acid biosynthesis; L-phenylalanine biosynthesis; L-phenylalanine from L-arogenate: step 1/1. Converts L-arogenate produced from the shikimate-chorismate pathway into phenylalanine (Phe). Involved in floral volatile benzenoids and phenylpropanoids (FVBP) production. This chain is Arogenate dehydratase 1, found in Petunia hybrida (Petunia).